Here is a 1451-residue protein sequence, read N- to C-terminus: ARF guanine-nucleotide exchange factor GNOM (1451 aa).

Residues 1–246 (MGRLKLHSGI…VNRAGSIKQE (246 aa)) are DCB domain. Residues 557–752 (RRKYIKRRLM…NEIRTTPEQG (196 aa)) enclose the SEC7 domain. Residue E658 is part of the active site. Residues 1430–1451 (SQLGDDETVSNGLSSPENTTGS) are disordered.

In terms of assembly, homodimer. Interacts with CYP19-4/CYP5 in vitro. In terms of tissue distribution, stems, leaves, flowers, siliques, floral inflorescence and roots. Expressed in the whole plant (at the protein level).

It is found in the cytoplasm. Its subcellular location is the cytosol. The protein resides in the endosome membrane. It localises to the cell membrane. With respect to regulation, inhibited by brefeldin A (BFA). Functionally, activates the ARF proteins by exchanging bound GDP for free GTP. Plays a role in vesicular protein sorting. Acts as the major regulator of endosomal vesicle trafficking but is also involved in the endocytosis process. Could function redundantly with GNL1 in the retrograde Golgi to endoplasmic reticulum trafficking. Regulates vesicle trafficking required for the coordinated polar localization of auxin efflux carriers which in turn determines the direction of auxin flow. Mediates the sorting of PIN1 from endosomal compartments to the basal plasma membrane and the polarization of PIN3 to the bottom side of hypocotyl endodermal cells. Involved in the specification of apical-basal pattern formation in the early embryo and during root formation. Required for correct cell wall organization leading to normal cell adhesion during seedling development. Also plays an essential role in hydrotropism of seedling roots. In Arabidopsis thaliana (Mouse-ear cress), this protein is ARF guanine-nucleotide exchange factor GNOM (GN).